Consider the following 332-residue polypeptide: Fructose-1,6-bisphosphatase class 1 (332 aa).

The Mg(2+) site is built by Glu89, Asp110, Leu112, and Asp113. Substrate-binding positions include 113–116 (DGSS), Asn206, Tyr239, 257–259 (YLY), and Lys269. Glu275 serves as a coordination point for Mg(2+).

It belongs to the FBPase class 1 family. Homotetramer. The cofactor is Mg(2+).

It localises to the cytoplasm. The catalysed reaction is beta-D-fructose 1,6-bisphosphate + H2O = beta-D-fructose 6-phosphate + phosphate. The protein operates within carbohydrate biosynthesis; gluconeogenesis. The polypeptide is Fructose-1,6-bisphosphatase class 1 (Salmonella arizonae (strain ATCC BAA-731 / CDC346-86 / RSK2980)).